Reading from the N-terminus, the 279-residue chain is Alcohol dehydrogenase-related 31 kDa protein (279 aa).

11–34 (YVADCGGIALETSKVLMTKNIAKL) is a binding site for NAD(+). Serine 139 is a binding site for substrate. Catalysis depends on tyrosine 152, which acts as the Proton acceptor.

It belongs to the short-chain dehydrogenases/reductases (SDR) family.

This chain is Alcohol dehydrogenase-related 31 kDa protein (Adhr), found in Drosophila guanche (Fruit fly).